Reading from the N-terminus, the 85-residue chain is Large ribosomal subunit protein bL27 (85 aa).

The protein belongs to the bacterial ribosomal protein bL27 family.

This is Large ribosomal subunit protein bL27 from Azobacteroides pseudotrichonymphae genomovar. CFP2.